A 138-amino-acid polypeptide reads, in one-letter code: Large ribosomal subunit protein uL16 (138 aa).

The segment covering 1-14 has biased composition (basic residues); sequence MLQPKRTKYRRTHR. The tract at residues 1–24 is disordered; that stretch reads MLQPKRTKYRRTHRLQHDKGEAHT. The span at 15-24 shows a compositional bias: basic and acidic residues; that stretch reads LQHDKGEAHT.

The protein belongs to the universal ribosomal protein uL16 family. As to quaternary structure, part of the 50S ribosomal subunit.

Functionally, binds 23S rRNA and is also seen to make contacts with the A and possibly P site tRNAs. This Mycoplasma mobile (strain ATCC 43663 / 163K / NCTC 11711) (Mesomycoplasma mobile) protein is Large ribosomal subunit protein uL16.